The chain runs to 255 residues: Small ribosomal subunit protein uS2 (255 aa).

Residues 226-255 form a disordered region; it reads QGVSNEEVAAEQNIDLDEKEKSEETEATEE.

Belongs to the universal ribosomal protein uS2 family.

The polypeptide is Small ribosomal subunit protein uS2 (Staphylococcus aureus (strain JH1)).